The following is a 91-amino-acid chain: Hepcidin-2 (91 aa).

Positions Met1 to Ala24 are cleaved as a signal peptide. Positions Val25–Thr64 are excised as a propeptide. 4 disulfide bridges follow: Cys73/Cys89, Cys76/Cys79, Cys77/Cys85, and Cys80/Cys88.

The protein belongs to the hepcidin family.

The protein localises to the secreted. In terms of biological role, seems to act as a signaling molecule involved in the maintenance of iron homeostasis. Seems to be required in conjunction with HFE to regulate both intestinal iron absorption and iron storage in macrophages. May also have antimicrobial activity. The sequence is that of Hepcidin-2 (hamp2) from Danio rerio (Zebrafish).